The primary structure comprises 329 residues: Quinone oxidoreductase (329 aa).

Residue A2 is modified to N-acetylalanine. K23 is modified (N6-acetyllysine). NADP(+) contacts are provided by residues Y53, 158–161, G181, H200, N229, 246–249, and 269–271; these read SGGV, VGSR, and VTL. A Phosphoserine modification is found at S248. The residue at position 296 (K296) is an N6-succinyllysine.

This sequence belongs to the zinc-containing alcohol dehydrogenase family. Quinone oxidoreductase subfamily. As to quaternary structure, homotetramer. As to expression, only very low amounts in the lens.

Its subcellular location is the cytoplasm. The enzyme catalyses 2 a quinone + NADPH + H(+) = 2 a 1,4-benzosemiquinone + NADP(+). Its function is as follows. Does not have alcohol dehydrogenase activity. Binds NADP and acts through a one-electron transfer process. Orthoquinones, such as 1,2-naphthoquinone or 9,10-phenanthrenequinone, are the best substrates (in vitro). May act in the detoxification of xenobiotics. Interacts with (AU)-rich elements (ARE) in the 3'-UTR of target mRNA species. Enhances the stability of mRNA coding for BCL2. NADPH binding interferes with mRNA binding. The sequence is that of Quinone oxidoreductase (CRYZ) from Homo sapiens (Human).